A 263-amino-acid polypeptide reads, in one-letter code: (E)-2-((N-methylformamido)methylene)succinate hydrolase (263 aa).

Ser-96 serves as the catalytic Nucleophile. Active-site residues include Asn-120 and His-241.

Belongs to the AB hydrolase superfamily. In terms of assembly, monomer.

The catalysed reaction is (E)-2-((N-methylformamido) methylene)succinate + 2 H2O + H(+) = succinate semialdehyde + methylamine + formate + CO2. In terms of biological role, involved in the degradation of the pyridine ring of trigonelline (TG; N-methylnicotinate) into succinate and methylamine as carbon and nitrogen sources, respectively. Catalyzes the hydrolysis of (E)-2-((N-methylformamido)methylene)succinate (MFMS) into formic acid, succinate semialdehyde (SSA), methylamine and carbon dioxide. The polypeptide is (E)-2-((N-methylformamido)methylene)succinate hydrolase (Acinetobacter baylyi (strain ATCC 33305 / BD413 / ADP1)).